The following is a 316-amino-acid chain: FAD:protein FMN transferase (316 aa).

FAD is bound by residues Met-14, 88 to 90 (AFN), and Asp-146. Ala-149 contacts Mg(2+). FAD-binding residues include Lys-152 and Leu-231. Mg(2+) contacts are provided by Asp-257 and Thr-261.

This sequence belongs to the ApbE family. Requires Mg(2+) as cofactor.

It localises to the cytoplasm. It catalyses the reaction L-threonyl-[protein] + FAD = FMN-L-threonyl-[protein] + AMP + H(+). In terms of biological role, flavin transferase that catalyzes the transfer of the FMN moiety of FAD and its covalent binding to the hydroxyl group of a threonine residue in a target flavoprotein. Is responsible for the modification of the fumarate reductase KPK_2907. In Klebsiella pneumoniae (strain 342), this protein is FAD:protein FMN transferase.